The sequence spans 735 residues: Two pore calcium channel protein 1B (735 aa).

Topologically, residues 1–76 (MEEYLLPGES…ELYFMFTRFD (76 aa)) are cytoplasmic. Residues 77-97 (FLWSLNYLALVVLNFFEKPLW) form a helical membrane-spanning segment. Topologically, residues 98-125 (CSKHLAESCNNRDYYYLGELPFLTGAES) are extracellular. The helical transmembrane segment at 126–146 (LIFEGVTLLLLIIHILFPISY) threads the bilayer. The Cytoplasmic segment spans residues 147–161 (EGFNLYWRSLLNRLK). The chain crosses the membrane as a helical span at residues 162 to 182 (VILLLILVADIVVYILLPADF). Position 183 (Y183) is a topological domain, extracellular. Residues 184-202 (YLPFRIAPYLRVVFFILNI) form a helical; Voltage-sensor membrane-spanning segment. Residues 203-208 (RELRDS) lie on the Cytoplasmic side of the membrane. The helical transmembrane segment at 209 to 229 (FFILAGMLGTYLNVVALSALF) threads the bilayer. Residues 230–248 (LLFSSWLAYVFFEDTRQGK) are Extracellular-facing. The segment at residues 249–263 (TTFTSYGTTLYQMFV) is an intramembrane region (pore-forming). Residues 264 to 286 (LFTTSNNPDVWIPAYKDSRWYCL) lie on the Extracellular side of the membrane. A helical membrane pass occupies residues 287–307 (FFVLYVLLGVYFVTNLILAVV). The Cytoplasmic segment spans residues 308 to 431 (YDSFKSELVK…ASEKLRGFIR (124 aa)). EF-hand domains are found at residues 325–360 (LRLRTLKKAFSLIDEANNGLLNEKQCTLLFEELNKY) and 366–401 (ISGDDFKSIFNELDDTGDFKINLEEFADLCSAIGLR). A helical transmembrane segment spans residues 432-452 (GATFEYIIVFVLLVNLVAVII). Topologically, residues 453–470 (ETTLDIQNNSGQTFWQKV) are extracellular. An N-linked (GlcNAc...) asparagine glycan is attached at N460. The chain crosses the membrane as a helical span at residues 471-491 (EFTFGWLYVIEMALKVYTYGF). The Cytoplasmic segment spans residues 492–501 (ENYWRDGQNR). A helical transmembrane segment spans residues 502-522 (FDFIVTWVIVIGETTTFVAPD). Residues 523-531 (DLTFLSNGE) lie on the Extracellular side of the membrane. A helical; Voltage-sensor transmembrane segment spans residues 532-549 (WIRYLLIARMLRLIRLLM). Over 550–560 (HVERYRAFVAT) the chain is Cytoplasmic. The chain crosses the membrane as a helical span at residues 561 to 581 (FLTLIPSLMPYLGTIFCILCF). Topologically, residues 582–618 (YCSLGLQIFGGIVNTGNPNLAQTDLAGNDYLLFNFND) are extracellular. Positions 619-633 (YPNGMVTLFNILVMG) form an intramembrane region, pore-forming. At 634 to 654 (NWQVWMQSYKELTGTSWTYAY) the chain is on the extracellular side. Residues 655-675 (FVSFYLISVLWLLNLIVAFVL) form a helical membrane-spanning segment. Topologically, residues 676–735 (EAFQAEMDLEASARCVDGDDKEAKRERRRNVGTKTRSQRVDFLLHHMLRSELTECSNDNP) are cytoplasmic.

The protein belongs to the calcium channel alpha-1 subunit (TC 1.A.1.11) family. Two pore calcium channel subfamily. In terms of assembly, homodimer.

The protein localises to the membrane. With respect to regulation, inhibited by Al(3+), La(3+) and Gd(3+). Up-regulated by H(2)O(2), cryptogein, salicylic acid (SA) and cold shock. Functionally, functions as a voltage-gated inward-rectifying Ca(2+) channel (VDCC) across the plasma membrane that mediates sucrose-induced Ca(2+) influx in autotrophically grown leaf cells. Acts as the major ROS-responsive Ca(2+) channel and is the possible target of Al-dependent inhibition. Plays a regulatory role in defense responses. This chain is Two pore calcium channel protein 1B (TPC1B), found in Nicotiana tabacum (Common tobacco).